The sequence spans 264 residues: Cysteine-rich repeat secretory protein 26 (264 aa).

The signal sequence occupies residues 1–27 (MSSNIFGSVPILVVVAIQLLLVHNVSS). 2 Gnk2-homologous domains span residues 34-142 (YLNH…SVDS) and 148-261 (YKRM…LYPF).

The protein belongs to the cysteine-rich repeat secretory protein family.

It localises to the secreted. The sequence is that of Cysteine-rich repeat secretory protein 26 (CRRSP26) from Arabidopsis thaliana (Mouse-ear cress).